The chain runs to 404 residues: Nicotinate phosphoribosyltransferase (404 aa).

H224 is subject to Phosphohistidine; by autocatalysis.

The protein belongs to the NAPRTase family. In terms of processing, transiently phosphorylated on a His residue during the reaction cycle. Phosphorylation strongly increases the affinity for substrates and increases the rate of nicotinate D-ribonucleotide production. Dephosphorylation regenerates the low-affinity form of the enzyme, leading to product release.

The catalysed reaction is nicotinate + 5-phospho-alpha-D-ribose 1-diphosphate + ATP + H2O = nicotinate beta-D-ribonucleotide + ADP + phosphate + diphosphate. It participates in cofactor biosynthesis; NAD(+) biosynthesis; nicotinate D-ribonucleotide from nicotinate: step 1/1. Functionally, catalyzes the synthesis of beta-nicotinate D-ribonucleotide from nicotinate and 5-phospho-D-ribose 1-phosphate at the expense of ATP. In Proteus mirabilis (strain HI4320), this protein is Nicotinate phosphoribosyltransferase.